We begin with the raw amino-acid sequence, 718 residues long: Methionine--tRNA ligase (718 aa).

The 'HIGH' region motif lies at 12-22 (PYANGDIHLGH). Zn(2+) contacts are provided by Cys-143, Cys-146, Cys-156, and Cys-159. The short motif at 349–353 (KMSKS) is the 'KMSKS' region element. Residue Lys-352 coordinates ATP. The tract at residues 573 to 599 (AAPAAKVASSQQRHAEKQQHEAQSAET) is disordered. Residues 608-718 (DFTKVDLRIA…TGAASGMRVK (111 aa)) form the tRNA-binding domain.

It belongs to the class-I aminoacyl-tRNA synthetase family. MetG type 1 subfamily. Homodimer. Zn(2+) serves as cofactor.

It is found in the cytoplasm. The catalysed reaction is tRNA(Met) + L-methionine + ATP = L-methionyl-tRNA(Met) + AMP + diphosphate. Is required not only for elongation of protein synthesis but also for the initiation of all mRNA translation through initiator tRNA(fMet) aminoacylation. The chain is Methionine--tRNA ligase from Aromatoleum aromaticum (strain DSM 19018 / LMG 30748 / EbN1) (Azoarcus sp. (strain EbN1)).